The sequence spans 611 residues: Chaperone protein DnaK (611 aa).

T173 bears the Phosphothreonine; by autocatalysis mark. Residues A579–A592 are compositionally biased toward low complexity. A disordered region spans residues A579–N598.

Belongs to the heat shock protein 70 family.

Its function is as follows. Acts as a chaperone. The polypeptide is Chaperone protein DnaK (Bacillus cereus (strain B4264)).